Reading from the N-terminus, the 85-residue chain is Senescence-associated and QQS-related protein (85 aa).

A compositionally biased stretch (basic and acidic residues) spans 1–24 (MSFRKVEKKPTEMGRNMTHEKSDS). Disordered regions lie at residues 1 to 35 (MSFRKVEKKPTEMGRNMTHEKSDSDSDNEGAPMTV) and 55 to 85 (SGKARSNYNLTGTAKGTGPINSFSRKHFPNY). A compositionally biased stretch (polar residues) spans 58–77 (ARSNYNLTGTAKGTGPINSF).

As to expression, expressed predominantly within leaves and cotyledons vasculatures. Mainly observed in fully expanded leaves, at the base of mature inflorescences, in senescing leaves and cauline leaves, and, to a lower extent, in hypocotyls and rosette leaves prior to flowering.

Plays a role in carbon allocation, including during senescence and stresses, thus impacting starch accumulation. The polypeptide is Senescence-associated and QQS-related protein (Arabidopsis thaliana (Mouse-ear cress)).